The chain runs to 231 residues: Ribonuclease 3 (231 aa).

The region spanning 8 to 135 (VGDLERRIGH…LMAALYQDGG (128 aa)) is the RNase III domain. E48 is a binding site for Mg(2+). Active-site residues include D52 and E124. E124 lines the Mg(2+) pocket. Residues 161–230 (DPKTALQEWA…AKALLEREGA (70 aa)) enclose the DRBM domain. The disordered stretch occupies residues 210 to 231 (GKSRQEAEKAAAKALLEREGAG). The segment covering 212 to 231 (SRQEAEKAAAKALLEREGAG) has biased composition (basic and acidic residues).

This sequence belongs to the ribonuclease III family. As to quaternary structure, homodimer. The cofactor is Mg(2+).

Its subcellular location is the cytoplasm. It catalyses the reaction Endonucleolytic cleavage to 5'-phosphomonoester.. Functionally, digests double-stranded RNA. Involved in the processing of primary rRNA transcript to yield the immediate precursors to the large and small rRNAs (23S and 16S). Processes some mRNAs, and tRNAs when they are encoded in the rRNA operon. Processes pre-crRNA and tracrRNA of type II CRISPR loci if present in the organism. The protein is Ribonuclease 3 of Caulobacter vibrioides (strain ATCC 19089 / CIP 103742 / CB 15) (Caulobacter crescentus).